We begin with the raw amino-acid sequence, 143 residues long: Large ribosomal subunit protein bL28c (143 aa).

The transit peptide at methionine 1 to alanine 66 directs the protein to the chloroplast.

Belongs to the bacterial ribosomal protein bL28 family. As to quaternary structure, part of the 50S ribosomal subunit.

It is found in the plastid. Its subcellular location is the chloroplast. The polypeptide is Large ribosomal subunit protein bL28c (RPL28) (Arabidopsis thaliana (Mouse-ear cress)).